Here is a 70-residue protein sequence, read N- to C-terminus: Large ribosomal subunit protein bL31 (70 aa).

It belongs to the bacterial ribosomal protein bL31 family. Type A subfamily. In terms of assembly, part of the 50S ribosomal subunit.

Its function is as follows. Binds the 23S rRNA. This Mycoplasma mobile (strain ATCC 43663 / 163K / NCTC 11711) (Mesomycoplasma mobile) protein is Large ribosomal subunit protein bL31.